The following is a 55-amino-acid chain: Large ribosomal subunit protein bL33 (55 aa).

Belongs to the bacterial ribosomal protein bL33 family.

The chain is Large ribosomal subunit protein bL33 from Dehalococcoides mccartyi (strain ATCC BAA-2100 / JCM 16839 / KCTC 5957 / BAV1).